The following is a 252-amino-acid chain: Lipoprotein PrgK (252 aa).

The signal sequence occupies residues 1 to 17 (MIRRYLYTFLLVMTLAG). Cys-18 is lipidated: N-palmitoyl cysteine. Cys-18 carries S-diacylglycerol cysteine lipidation. Residues 207–227 (FATSWIVLIILLSVMSAGFGV) form a helical membrane-spanning segment.

It belongs to the YscJ lipoprotein family.

It localises to the cell outer membrane. Its function is as follows. Required for invasion of epithelial cells. Could be involved in protein secretion. The sequence is that of Lipoprotein PrgK (prgK) from Salmonella typhimurium (strain LT2 / SGSC1412 / ATCC 700720).